A 161-amino-acid chain; its full sequence is Nucleotide-binding protein xcc-b100_3818 (161 aa).

This sequence belongs to the YajQ family.

Nucleotide-binding protein. The chain is Nucleotide-binding protein xcc-b100_3818 from Xanthomonas campestris pv. campestris (strain B100).